Reading from the N-terminus, the 334-residue chain is Phosphate acyltransferase (334 aa).

The protein belongs to the PlsX family. In terms of assembly, homodimer. Probably interacts with PlsY.

It localises to the cytoplasm. It carries out the reaction a fatty acyl-[ACP] + phosphate = an acyl phosphate + holo-[ACP]. It participates in lipid metabolism; phospholipid metabolism. In terms of biological role, catalyzes the reversible formation of acyl-phosphate (acyl-PO(4)) from acyl-[acyl-carrier-protein] (acyl-ACP). This enzyme utilizes acyl-ACP as fatty acyl donor, but not acyl-CoA. This is Phosphate acyltransferase from Mycoplasma capricolum subsp. capricolum (strain California kid / ATCC 27343 / NCTC 10154).